Reading from the N-terminus, the 545-residue chain is Chaperonin GroEL (545 aa).

ATP contacts are provided by residues 30–33 (TLGP), Lys51, 87–91 (DGTTT), Gly415, and Asp495.

Belongs to the chaperonin (HSP60) family. In terms of assembly, forms a cylinder of 14 subunits composed of two heptameric rings stacked back-to-back. Interacts with the co-chaperonin GroES.

It is found in the cytoplasm. The catalysed reaction is ATP + H2O + a folded polypeptide = ADP + phosphate + an unfolded polypeptide.. In terms of biological role, together with its co-chaperonin GroES, plays an essential role in assisting protein folding. The GroEL-GroES system forms a nano-cage that allows encapsulation of the non-native substrate proteins and provides a physical environment optimized to promote and accelerate protein folding. This is Chaperonin GroEL from Shewanella oneidensis (strain ATCC 700550 / JCM 31522 / CIP 106686 / LMG 19005 / NCIMB 14063 / MR-1).